Reading from the N-terminus, the 346-residue chain is Phosphoribosylformylglycinamidine cyclo-ligase (346 aa).

The protein belongs to the AIR synthase family.

The protein localises to the cytoplasm. The catalysed reaction is 2-formamido-N(1)-(5-O-phospho-beta-D-ribosyl)acetamidine + ATP = 5-amino-1-(5-phospho-beta-D-ribosyl)imidazole + ADP + phosphate + H(+). The protein operates within purine metabolism; IMP biosynthesis via de novo pathway; 5-amino-1-(5-phospho-D-ribosyl)imidazole from N(2)-formyl-N(1)-(5-phospho-D-ribosyl)glycinamide: step 2/2. This is Phosphoribosylformylglycinamidine cyclo-ligase from Geobacillus sp. (strain WCH70).